The following is a 564-amino-acid chain: Proline--tRNA ligase (564 aa).

The protein belongs to the class-II aminoacyl-tRNA synthetase family. ProS type 1 subfamily. In terms of assembly, homodimer.

It is found in the cytoplasm. It carries out the reaction tRNA(Pro) + L-proline + ATP = L-prolyl-tRNA(Pro) + AMP + diphosphate. In terms of biological role, catalyzes the attachment of proline to tRNA(Pro) in a two-step reaction: proline is first activated by ATP to form Pro-AMP and then transferred to the acceptor end of tRNA(Pro). As ProRS can inadvertently accommodate and process non-cognate amino acids such as alanine and cysteine, to avoid such errors it has two additional distinct editing activities against alanine. One activity is designated as 'pretransfer' editing and involves the tRNA(Pro)-independent hydrolysis of activated Ala-AMP. The other activity is designated 'posttransfer' editing and involves deacylation of mischarged Ala-tRNA(Pro). The misacylated Cys-tRNA(Pro) is not edited by ProRS. The sequence is that of Proline--tRNA ligase from Coxiella burnetii (strain RSA 331 / Henzerling II).